The primary structure comprises 359 residues: Cyclin-Y-like protein 1 (359 aa).

3 positions are modified to phosphoserine: Ser67, Ser105, and Ser112. The 123-residue stretch at 145-267 (VTLAIYYHIK…CQILKDITVE (123 aa)) folds into the Cyclin N-terminal domain. Ser344 carries the phosphoserine modification.

Belongs to the cyclin family. Cyclin Y subfamily. Interacts with CDK16; this interaction mutually increases the stability of CDK16 and CCNYL1 and increases the kinase activity of CDK16.

Its subcellular location is the cell membrane. Its function is as follows. Key regulator of Wnt signaling implicated in various biological processes including male fertility, embryonic neurogenesis and cortex development. Activates the cyclin-dependent kinase CDK16, and promotes sperm maturation. This Homo sapiens (Human) protein is Cyclin-Y-like protein 1.